We begin with the raw amino-acid sequence, 649 residues long: 1-deoxy-D-xylulose-5-phosphate synthase (649 aa).

Thiamine diphosphate is bound by residues histidine 74 and 115-117 (GHA). Aspartate 146 is a binding site for Mg(2+). Residues 147–148 (GA), asparagine 176, tyrosine 292, and glutamate 375 each bind thiamine diphosphate. Asparagine 176 contributes to the Mg(2+) binding site.

This sequence belongs to the transketolase family. DXPS subfamily. In terms of assembly, homodimer. The cofactor is Mg(2+). Requires thiamine diphosphate as cofactor.

The enzyme catalyses D-glyceraldehyde 3-phosphate + pyruvate + H(+) = 1-deoxy-D-xylulose 5-phosphate + CO2. The protein operates within metabolic intermediate biosynthesis; 1-deoxy-D-xylulose 5-phosphate biosynthesis; 1-deoxy-D-xylulose 5-phosphate from D-glyceraldehyde 3-phosphate and pyruvate: step 1/1. Its function is as follows. Catalyzes the acyloin condensation reaction between C atoms 2 and 3 of pyruvate and glyceraldehyde 3-phosphate to yield 1-deoxy-D-xylulose-5-phosphate (DXP). The sequence is that of 1-deoxy-D-xylulose-5-phosphate synthase from Synechococcus sp. (strain JA-3-3Ab) (Cyanobacteria bacterium Yellowstone A-Prime).